Consider the following 270-residue polypeptide: MSGQQSSPVYKIALGIEYDGSKYYGWQRQNEVRSVQEKLEKALSQVANEPINVFCAGRTDAGVHGTGQVVHFETTALRKDAAWTLGVNANLPGDIAVRWVKTVPDDFHARFSATARRYRYIIYNHRLRPAVLAKGVTHYYEPLDAERMHRAAQCLLGENDFTSFRAVQCQSRTPWRNVMHINVTRHGPYVVVDIKANAFVHHMVRNIVGSLLEVGAHNQPESWIAELLAARDRTLAAATAKAEGLYLVAVDYPDRFDLPKPPMGPLFLAD.

D60 serves as the catalytic Nucleophile. Substrate is bound at residue Y118.

It belongs to the tRNA pseudouridine synthase TruA family. In terms of assembly, homodimer.

It catalyses the reaction uridine(38/39/40) in tRNA = pseudouridine(38/39/40) in tRNA. In terms of biological role, formation of pseudouridine at positions 38, 39 and 40 in the anticodon stem and loop of transfer RNAs. The protein is tRNA pseudouridine synthase A of Salmonella agona (strain SL483).